The chain runs to 212 residues: Ropporin-1 (212 aa).

In terms of domain architecture, RIIa spans 12-49 (PELPKMLKEFAKAAIRAQPQDLIQWGADYFEALSRGET). Ser56 is modified (phosphoserine). Residues 209 to 212 (VWLE) are interaction with RHPN1.

Belongs to the ropporin family. In terms of assembly, homodimer. Interacts with AKAP3. May interact with SPA17. Interacts with RHPN1. Interacts with FSCB; the interaction increases upon spermatozoa capacitation conditions. Interacts with CFAP61. Post-translationally, sumoylated, sumoylation decreases upon spermatozoa capacitation conditions.

The protein resides in the cell projection. The protein localises to the cilium. It is found in the flagellum. In terms of biological role, important for male fertility. With ROPN1L, involved in fibrous sheath integrity and sperm motility, plays a role in PKA-dependent signaling processes required for spermatozoa capacitation. The sequence is that of Ropporin-1 (ROPN1) from Macaca fascicularis (Crab-eating macaque).